We begin with the raw amino-acid sequence, 567 residues long: NAC domain-containing protein 78 (567 aa).

The NAC domain occupies Leu9 to Lys159. Residues Val108 to Lys165 mediate DNA binding. The disordered stretch occupies residues Asn393 to Asp436. Residues Leu397–Gly423 are compositionally biased toward basic and acidic residues. The chain crosses the membrane as a helical span at residues Leu544–Val564.

As to expression, expressed in root meristem. Expressed in roots, rosette leaves, cauline leaves, shoot apex, stems and flowers.

The protein localises to the membrane. It is found in the nucleus. Its function is as follows. Transcriptional activator activated by proteolytic cleavage through regulated intramembrane proteolysis (RIP). Transcripition activator associated with the induction of genes related to flavonoid biosynthesis and required for the accumulation of anthocyanins in response to high light stress. Plays a role in the regulation of 20S and 26S proteasomes in response to high light stress. This is NAC domain-containing protein 78 (NAC078) from Arabidopsis thaliana (Mouse-ear cress).